Here is a 716-residue protein sequence, read N- to C-terminus: MKPHNSEKYFVKNGQPHFLISGEVHYFRINPKLWRNHLQLLKQTGADTVSTYIPWDWHEIEEDDFDFEGKTHPARNLIRFIKLCKEENLDLIVKPGPYILAEYENQGLPSWLLKKLSKNAFALDENGNVISPDLVSYLSDEFLEYTFKWYDKVMPIISKHQKEHYGPITMMQLCNEIGVFQWLSGKSDYNPKVINLYKEFIIQRYKTIEKLNSVYSTNYNSFDDLKAPSGKIKLRSDYCAYFDFHLFFREYYNKYISILKNKIRSFGINIKLTHNIPGWIYGNASELPMLISTYSEIMKNHPDIIFGLDHIPEFVSFRNAHSDLACNKILEAMQPEAPVWAAEFQAGTREHHVKAYAKDLETFYIASLAHGIKGFNYYMFSQGINPEGKGFYGKTFYFQTALDAASNKLALYDSIKKVNRFIRKEQKDLLRTNVNSEICVGFYKPYFFTELISSQLLKEKKLNVEELGLYIDPRFLREEILFNGLLRGLQTLNYNYDVVDLENCDLKSLTAYKQLWITSAEFMDAETQNLLSEFVLNGGNLILYPAVPTLDNYLNRCEILKNNFGIEFITKDSSHKVSAFGIEDVFTAFSKKQIYNDTNSKPIAFTQENEICGIRKKIGKGELTILGFAFGYTSDEHLELIDKLVKLNKIKRELFVSDKDIQFVVRENNKSRYIFFLNYHNERKTFNYRKSSELKKKKSEEISIAPFSYKVIKENK.

Sophorose-binding residues include Tyr52, Ile99, Ala101, Glu102, Asn175, Glu176, Gly278, Trp279, Glu343, and Arg349. Glu176 acts as the Proton donor/acceptor in catalysis. Glu176, Gly278, and Trp279 together coordinate beta-D-glucose. Glu343 serves as the catalytic Nucleophile. Beta-D-glucose-binding residues include Arg349, Lys358, and Glu361. A sophorose-binding site is contributed by Tyr378. Beta-D-glucose contacts are provided by Ser708 and Tyr709.

It belongs to the glycosyl hydrolase 35 family. Homidimer.

The protein localises to the cytoplasm. It catalyses the reaction a D-glucoside + [(1-&gt;2)-beta-D-glucosyl](n) = a beta-D-glucosyl-(1-&gt;2)-D-glucoside + [(1-&gt;2)-beta-D-glucosyl](n-1). In terms of biological role, glycosyltransferase acting on beta-1,2-glucooligosaccharides. Catalyzes the transfer of a glucosyl residue from the non-reducing end of a 1,2-beta-D-glucan to a glucose residue of an acceptor molecule, forming a beta-1,2-glucosidic bond. The beta-1,2-linked glucose dimer sophorose is the preferred donor in vitro. Has a very broad specificity for the acceptor and can act on various aryl- and alkyl-glucosides. Does not show any hydrolytic activity. The chain is Beta-1,2-glucosyltransferase from Ignavibacterium album (strain DSM 19864 / JCM 16511 / NBRC 101810 / Mat9-16).